Here is a 434-residue protein sequence, read N- to C-terminus: Trigger factor (434 aa).

One can recognise a PPIase FKBP-type domain in the interval 160-245 (GDKVKMNFVG…LTEVQAANLP (86 aa)).

It belongs to the FKBP-type PPIase family. Tig subfamily.

Its subcellular location is the cytoplasm. The enzyme catalyses [protein]-peptidylproline (omega=180) = [protein]-peptidylproline (omega=0). Involved in protein export. Acts as a chaperone by maintaining the newly synthesized protein in an open conformation. Functions as a peptidyl-prolyl cis-trans isomerase. This chain is Trigger factor, found in Shewanella baltica (strain OS185).